The chain runs to 149 residues: Large ribosomal subunit protein uL15A (149 aa).

The tract at residues 21 to 40 is disordered; the sequence is RIGKHRKQRGGRGNAGGQHH.

This sequence belongs to the universal ribosomal protein uL15 family. In terms of assembly, component of the large ribosomal subunit.

The protein resides in the cytoplasm. Its subcellular location is the cytosol. It is found in the endoplasmic reticulum. In terms of biological role, component of the large ribosomal subunit. The ribosome is a large ribonucleoprotein complex responsible for the synthesis of proteins in the cell. The protein is Large ribosomal subunit protein uL15A (rpl27a-1) of Entamoeba histolytica (strain ATCC 30459 / HM-1:IMSS / ABRM).